Reading from the N-terminus, the 607-residue chain is Glutamine--fructose-6-phosphate aminotransferase [isomerizing] (607 aa).

Cys2 acts as the Nucleophile; for GATase activity in catalysis. Residues 2-217 (CGIIGILGKR…DGDWAVLTRE (216 aa)) enclose the Glutamine amidotransferase type-2 domain. 2 consecutive SIS domains span residues 277-422 (TVRS…QRGF) and 455-597 (ICRN…VDQP). Lys602 serves as the catalytic For Fru-6P isomerization activity.

In terms of assembly, homodimer.

It is found in the cytoplasm. The enzyme catalyses D-fructose 6-phosphate + L-glutamine = D-glucosamine 6-phosphate + L-glutamate. Catalyzes the first step in hexosamine metabolism, converting fructose-6P into glucosamine-6P using glutamine as a nitrogen source. The polypeptide is Glutamine--fructose-6-phosphate aminotransferase [isomerizing] (Bartonella henselae (strain ATCC 49882 / DSM 28221 / CCUG 30454 / Houston 1) (Rochalimaea henselae)).